Here is a 239-residue protein sequence, read N- to C-terminus: RNA polymerase sigma factor FliA (239 aa).

Residues 16–88 form a sigma-70 factor domain-2 region; it reads LWQRYVPLVR…MLDELRSRDW (73 aa). The Interaction with polymerase core subunit RpoC signature appears at 43–46; it reads DLLQ. Residues 96-166 form a sigma-70 factor domain-3 region; it reads NAREVAQAMG…IELVTEEHQQ (71 aa). The tract at residues 185-233 is sigma-70 factor domain-4; sequence AIESLPEREQLVLTLYYQEELNLKEIGAVLEVGESRVSQLHSQAIKRLR. Positions 207–226 form a DNA-binding region, H-T-H motif; the sequence is LKEIGAVLEVGESRVSQLHS.

The protein belongs to the sigma-70 factor family. FliA subfamily.

It localises to the cytoplasm. In terms of biological role, sigma factors are initiation factors that promote the attachment of RNA polymerase to specific initiation sites and are then released. This sigma factor controls the expression of flagella-related genes. The polypeptide is RNA polymerase sigma factor FliA (Salmonella typhi).